A 195-amino-acid chain; its full sequence is Peptidyl-tRNA hydrolase (195 aa).

Tyrosine 17 is a tRNA binding site. Catalysis depends on histidine 22, which acts as the Proton acceptor. TRNA is bound by residues tyrosine 68, asparagine 70, and asparagine 116.

It belongs to the PTH family. Monomer.

Its subcellular location is the cytoplasm. It carries out the reaction an N-acyl-L-alpha-aminoacyl-tRNA + H2O = an N-acyl-L-amino acid + a tRNA + H(+). Hydrolyzes ribosome-free peptidyl-tRNAs (with 1 or more amino acids incorporated), which drop off the ribosome during protein synthesis, or as a result of ribosome stalling. In terms of biological role, catalyzes the release of premature peptidyl moieties from peptidyl-tRNA molecules trapped in stalled 50S ribosomal subunits, and thus maintains levels of free tRNAs and 50S ribosomes. The chain is Peptidyl-tRNA hydrolase from Shewanella sp. (strain ANA-3).